A 300-amino-acid chain; its full sequence is Phospholipase A1 (300 aa).

C4 and C87 are oxidised to a cystine. The active-site Nucleophile is the S137. The active-site Charge relay system is D165. Cystine bridges form between C176–C181 and C218–C227. H229 acts as the Charge relay system in catalysis. 3 cysteine pairs are disulfide-bonded: C244–C268, C245–C293, and C261–C266.

This sequence belongs to the AB hydrolase superfamily. Lipase family. As to expression, expressed by the venom gland.

It is found in the secreted. The catalysed reaction is a 1,2-diacyl-sn-glycero-3-phosphocholine + H2O = a 2-acyl-sn-glycero-3-phosphocholine + a fatty acid + H(+). Local inflammatory effects are inhibited by antiserotonin drugs (cyproheptadine and methysergide), indomethacin, betamethasone, and antihistamine (chlorpheniramine). In terms of biological role, catalyzes the hydrolysis of phosphatidylcholine with phospholipase A1 activity. Shows potent hemolytic activity that is responsible for its lethal effect. May act as an allergen. In vivo, induces local inflammatory effects. The polypeptide is Phospholipase A1 (Vespa basalis (Hornet)).